Here is a 184-residue protein sequence, read N- to C-terminus: dCTP deaminase (184 aa).

DCTP is bound by residues 107–112 (KSTYAR), 131–133 (TLE), Gln-152, Tyr-166, and Gln-176. The Proton donor/acceptor role is filled by Glu-133.

Belongs to the dCTP deaminase family. Homotrimer.

It carries out the reaction dCTP + H2O + H(+) = dUTP + NH4(+). It participates in pyrimidine metabolism; dUMP biosynthesis; dUMP from dCTP (dUTP route): step 1/2. Catalyzes the deamination of dCTP to dUTP. This Gemmatimonas aurantiaca (strain DSM 14586 / JCM 11422 / NBRC 100505 / T-27) protein is dCTP deaminase.